A 403-amino-acid chain; its full sequence is Poly(rC)-binding protein 4 (403 aa).

3 KH domains span residues 17–67 (TLTL…TITG), 101–154 (PVTL…TVSG), and 241–293 (TSSQ…TITG).

In terms of tissue distribution, widely expressed, with highest levels in testis and lowest in heart.

The protein localises to the cytoplasm. Its function is as follows. Single-stranded nucleic acid binding protein that binds preferentially to oligo dC. In Mus musculus (Mouse), this protein is Poly(rC)-binding protein 4 (Pcbp4).